We begin with the raw amino-acid sequence, 524 residues long: Nucleoporin NUP56 (524 aa).

The interval 1–219 is disordered; sequence MADDPHNTST…SSMAKFASST (219 aa). 3 stretches are compositionally biased toward basic and acidic residues: residues 28–80, 114–168, and 179–199; these read VKED…EPEK, THDE…KEVE, and SAEKPKIEEKKDESKDTKVDK. Residues 37–44 carry the Nuclear localization signal motif; sequence ARRELKQT. Residues 111-133 adopt a coiled-coil conformation; the sequence is KKRTHDELEQDGKEEEEKKEGEK. Residues 200-219 show a composition bias toward polar residues; it reads PQTSSSAFANSSMAKFASST. 7 FG repeats span residues 223 to 224, 226 to 227, 237 to 238, 247 to 248, 266 to 267, 312 to 313, and 328 to 329; these read FG. Disordered stretches follow at residues 247 to 284 and 300 to 371; these read FGSKSADASAAPAGPPKLSFGSASAASPFASLNGQAGG and GSSA…GEEK. Residues 248–277 show a composition bias toward low complexity; the sequence is GSKSADASAAPAGPPKLSFGSASAASPFAS. Acidic residues-rich tracts occupy residues 332-345 and 352-362; these read ESDEEDEGEGEEGE and GEGEEKEEEEK. Positions 345–376 form a coiled coil; that stretch reads EENKSENGEGEEKEEEEKEEKASGEEKKKFKL. The 99-residue stretch at 377–475 folds into the RanBD1 domain; it reads QKVHIDDGEG…TPILPAMKFQ (99 aa). Residues 503 to 524 adopt a coiled-coil conformation; that stretch reads SQANATQFSNMVEKIKEKLAAA.

The nuclear pore complex (NPC) constitutes the exclusive means of nucleocytoplasmic transport. NPCs allow the passive diffusion of ions and small molecules and the active, nuclear transport receptor-mediated bidirectional transport of macromolecules such as proteins, RNAs, ribonucleoparticles (RNPs), and ribosomal subunits across the nuclear envelope. The 55-60 MDa NPC is composed of at least 28 different subunits: AMO1, ELYS, GLE1, GLE2, MLP1, NDC1, NIC96, NSP1, NUP133, NUP145, NUP152, NUP159, NUP170, NUP188, NUP192, NUP37, NUP49, NUP53, NUP56, NUP57, NUP82, NUP84, NUP85, POM152, POM33, POM34, SEC13 and SEH1. Due to its 8-fold rotational symmetry, all subunits are present with 8 copies or multiples thereof.

It localises to the nucleus. The protein resides in the nuclear pore complex. Its subcellular location is the nucleus membrane. Functionally, functions as a component of the nuclear pore complex (NPC). NPC components, collectively referred to as nucleoporins (NUPs), can play the role of both NPC structural components and of docking or interaction partners for transiently associated nuclear transport factors. Active directional transport is assured by both, a Phe-Gly (FG) repeat affinity gradient for these transport factors across the NPC and a transport cofactor concentration gradient across the nuclear envelope (GSP1 and GSP2 GTPases associated predominantly with GTP in the nucleus, with GDP in the cytoplasm). The sequence is that of Nucleoporin NUP56 (NUP56) from Chaetomium thermophilum (strain DSM 1495 / CBS 144.50 / IMI 039719) (Thermochaetoides thermophila).